The chain runs to 134 residues: uncharacterized protein (134 aa).

Residues 1-30 (MGTLQGAALRSRERPSWPQETHGHRERTEE) are disordered. Residues 10-30 (RSRERPSWPQETHGHRERTEE) are compositionally biased toward basic and acidic residues.

This is an uncharacterized protein from Homo sapiens (Human).